Here is a 206-residue protein sequence, read N- to C-terminus: Pyridoxal 5'-phosphate synthase subunit PdxT (206 aa).

An L-glutamine-binding site is contributed by 59 to 61; it reads GES. C91 serves as the catalytic Nucleophile. L-glutamine is bound by residues R123 and 151-152; that span reads IR. Residues H187 and E189 each act as charge relay system in the active site.

It belongs to the glutaminase PdxT/SNO family. In terms of assembly, in the presence of PdxS, forms a dodecamer of heterodimers. Only shows activity in the heterodimer.

The catalysed reaction is aldehydo-D-ribose 5-phosphate + D-glyceraldehyde 3-phosphate + L-glutamine = pyridoxal 5'-phosphate + L-glutamate + phosphate + 3 H2O + H(+). The enzyme catalyses L-glutamine + H2O = L-glutamate + NH4(+). It participates in cofactor biosynthesis; pyridoxal 5'-phosphate biosynthesis. In terms of biological role, catalyzes the hydrolysis of glutamine to glutamate and ammonia as part of the biosynthesis of pyridoxal 5'-phosphate. The resulting ammonia molecule is channeled to the active site of PdxS. The sequence is that of Pyridoxal 5'-phosphate synthase subunit PdxT from Mycobacterium sp. (strain JLS).